The chain runs to 104 residues: Large ribosomal subunit protein uL24 (104 aa).

Belongs to the universal ribosomal protein uL24 family. In terms of assembly, part of the 50S ribosomal subunit.

Its function is as follows. One of two assembly initiator proteins, it binds directly to the 5'-end of the 23S rRNA, where it nucleates assembly of the 50S subunit. Functionally, one of the proteins that surrounds the polypeptide exit tunnel on the outside of the subunit. The chain is Large ribosomal subunit protein uL24 from Bradyrhizobium sp. (strain ORS 278).